The sequence spans 168 residues: ATP synthase subunit b, sodium ion specific (168 aa).

A helical membrane pass occupies residues V9–F29.

The protein belongs to the ATPase B chain family. F-type ATPases have 2 components, F(1) - the catalytic core - and F(0) - the membrane proton channel. F(1) has five subunits: alpha(3), beta(3), gamma(1), delta(1), epsilon(1). F(0) has three main subunits: a(1), b(2) and c(10-14). The alpha and beta chains form an alternating ring which encloses part of the gamma chain. F(1) is attached to F(0) by a central stalk formed by the gamma and epsilon chains, while a peripheral stalk is formed by the delta and b chains.

The protein localises to the cell inner membrane. In terms of biological role, f(1)F(0) ATP synthase produces ATP from ADP in the presence of a proton or sodium gradient. F-type ATPases consist of two structural domains, F(1) containing the extramembraneous catalytic core and F(0) containing the membrane proton channel, linked together by a central stalk and a peripheral stalk. During catalysis, ATP synthesis in the catalytic domain of F(1) is coupled via a rotary mechanism of the central stalk subunits to proton translocation. Component of the F(0) channel, it forms part of the peripheral stalk, linking F(1) to F(0). The polypeptide is ATP synthase subunit b, sodium ion specific (atpF) (Propionigenium modestum).